The primary structure comprises 158 residues: Cyclic pyranopterin monophosphate synthase (158 aa).

Residues 76-78 (LCH) and 114-115 (ME) each bind substrate. Asp-129 is an active-site residue.

It belongs to the MoaC family. In terms of assembly, homohexamer; trimer of dimers.

It catalyses the reaction (8S)-3',8-cyclo-7,8-dihydroguanosine 5'-triphosphate = cyclic pyranopterin phosphate + diphosphate. The protein operates within cofactor biosynthesis; molybdopterin biosynthesis. Its function is as follows. Catalyzes the conversion of (8S)-3',8-cyclo-7,8-dihydroguanosine 5'-triphosphate to cyclic pyranopterin monophosphate (cPMP). This Brucella anthropi (strain ATCC 49188 / DSM 6882 / CCUG 24695 / JCM 21032 / LMG 3331 / NBRC 15819 / NCTC 12168 / Alc 37) (Ochrobactrum anthropi) protein is Cyclic pyranopterin monophosphate synthase.